A 187-amino-acid polypeptide reads, in one-letter code: Threonylcarbamoyl-AMP synthase (187 aa).

Residues 4–187 enclose the YrdC-like domain; sequence TLDLDRAVAT…DARSGQILRD (184 aa).

Belongs to the SUA5 family. TsaC subfamily.

It is found in the cytoplasm. It carries out the reaction L-threonine + hydrogencarbonate + ATP = L-threonylcarbamoyladenylate + diphosphate + H2O. Functionally, required for the formation of a threonylcarbamoyl group on adenosine at position 37 (t(6)A37) in tRNAs that read codons beginning with adenine. Catalyzes the conversion of L-threonine, HCO(3)(-)/CO(2) and ATP to give threonylcarbamoyl-AMP (TC-AMP) as the acyladenylate intermediate, with the release of diphosphate. This Xanthomonas euvesicatoria pv. vesicatoria (strain 85-10) (Xanthomonas campestris pv. vesicatoria) protein is Threonylcarbamoyl-AMP synthase.